A 389-amino-acid polypeptide reads, in one-letter code: Probable acyl-CoA dehydrogenase fadE25 (389 aa).

The protein belongs to the acyl-CoA dehydrogenase family. FAD is required as a cofactor.

The enzyme catalyses a 2,3-saturated acyl-CoA + A = a 2,3-dehydroacyl-CoA + AH2. This Mycobacterium bovis (strain ATCC BAA-935 / AF2122/97) protein is Probable acyl-CoA dehydrogenase fadE25 (fadE25).